A 555-amino-acid polypeptide reads, in one-letter code: Cytochrome P450 78A11 (555 aa).

A helical transmembrane segment spans residues 12 to 32 (VDATWWAYALPALLGADTLCA). Cysteine 495 lines the heme pocket.

Belongs to the cytochrome P450 family. It depends on heme as a cofactor. As to expression, expressed in seedlings, shoot apices and young panicles, but not in mature leaves, calli and roots.

It is found in the membrane. Functionally, involved in the regular timing (plastochron) of lateral organs formation. May regulate the rate of leaf initiation and the duration of vegetative phase. Seems to be redundant to the function of PLASTOCHRON2, but to act in an independent pathway. This chain is Cytochrome P450 78A11 (CYP78A11), found in Oryza sativa subsp. japonica (Rice).